Reading from the N-terminus, the 226-residue chain is Translation initiation factor IF-3 (226 aa).

The tract at residues 195-226 is disordered; sequence FVPLAPLSPEDLIEEPELESESDSDAEPESDN. Residues 205–226 show a composition bias toward acidic residues; the sequence is DLIEEPELESESDSDAEPESDN.

The protein belongs to the IF-3 family. As to quaternary structure, monomer.

The protein resides in the cytoplasm. Its function is as follows. IF-3 binds to the 30S ribosomal subunit and shifts the equilibrium between 70S ribosomes and their 50S and 30S subunits in favor of the free subunits, thus enhancing the availability of 30S subunits on which protein synthesis initiation begins. In Chlorobium chlorochromatii (strain CaD3), this protein is Translation initiation factor IF-3.